Consider the following 133-residue polypeptide: FK506-binding protein 2 (133 aa).

An N-terminal signal peptide occupies residues 1–20 (MKLLYCLLLVILALVGLSSG). A PPIase FKBP-type domain is found at 45–133 (GDKLKIHYTG…IFDVELIGIN (89 aa)).

The protein belongs to the FKBP-type PPIase family.

The catalysed reaction is [protein]-peptidylproline (omega=180) = [protein]-peptidylproline (omega=0). Inhibited by both FK506 and rapamycin. Functionally, PPIases accelerate the folding of proteins by catalyzing the cis-trans isomerization of proline imidic peptide bonds in oligopeptides. This chain is FK506-binding protein 2 (fkbp2), found in Dictyostelium discoideum (Social amoeba).